Consider the following 95-residue polypeptide: NADH-quinone oxidoreductase subunit 11 (95 aa).

3 helical membrane-spanning segments follow: residues 1-21, 25-45, and 59-79; these read MSYLLTSALLFALGVYGVLTR, ILVFLSIELMLNAANLSLVGF, and MVIAVAAAEVAVGLGLIVAIF.

The protein belongs to the complex I subunit 4L family. As to quaternary structure, NDH-1 is composed of 15 different subunits, Nqo1 to Nqo15. The complex has a L-shaped structure, with the hydrophobic arm (subunits Nqo7, Nqo8 and Nqo10 to Nqo14) embedded in the membrane and the hydrophilic peripheral arm (subunits Nqo1 to Nqo6, Nqo9 and Nqo15) protruding into the bacterial cytoplasm. The hydrophilic domain contains all the redox centers.

It is found in the cell inner membrane. It catalyses the reaction a quinone + NADH + 5 H(+)(in) = a quinol + NAD(+) + 4 H(+)(out). Functionally, NDH-1 shuttles electrons from NADH, via FMN and iron-sulfur (Fe-S) centers, to quinones in the respiratory chain. The immediate electron acceptor for the enzyme in this species is menaquinone. Couples the redox reaction to proton translocation (for every two electrons transferred, four hydrogen ions are translocated across the cytoplasmic membrane), and thus conserves the redox energy in a proton gradient required for the synthesis of ATP. This Thermus thermophilus (strain ATCC 27634 / DSM 579 / HB8) protein is NADH-quinone oxidoreductase subunit 11 (nqo11).